A 125-amino-acid polypeptide reads, in one-letter code: MIQALLVAVGGAIGSVLRYFVGQWALRLMGPAFPWGTLAVNVVGCFVIGVFAELVTRKFNASVELRLLLITGFLGGFTTFSAFSLDAISLFERGEAVAGGIYIAASVGLSMAAVFAGLAIMRALV.

A run of 4 helical transmembrane segments spans residues 1–21 (MIQALLVAVGGAIGSVLRYFV), 32–52 (AFPWGTLAVNVVGCFVIGVFA), 68–88 (LLITGFLGGFTTFSAFSLDAI), and 101–121 (IYIAASVGLSMAAVFAGLAIM). 2 residues coordinate Na(+): Gly-75 and Thr-78.

It belongs to the fluoride channel Fluc/FEX (TC 1.A.43) family.

The protein localises to the cell inner membrane. The catalysed reaction is fluoride(in) = fluoride(out). With respect to regulation, na(+) is not transported, but it plays an essential structural role and its presence is essential for fluoride channel function. In terms of biological role, fluoride-specific ion channel. Important for reducing fluoride concentration in the cell, thus reducing its toxicity. The sequence is that of Fluoride-specific ion channel FluC from Rhizobium etli (strain ATCC 51251 / DSM 11541 / JCM 21823 / NBRC 15573 / CFN 42).